A 292-amino-acid chain; its full sequence is Probable ABC transporter phosphonate/phosphite binding protein PhnD2 (292 aa).

The first 20 residues, M1–A20, serve as a signal peptide directing secretion. The N-palmitoyl cysteine moiety is linked to residue C21. A lipid anchor (S-diacylglycerol cysteine) is attached at C21.

Belongs to the phosphate/phosphite/phosphonate binding protein family. In terms of assembly, the complex may be composed of two ATP-binding proteins (PhnC2), two transmembrane proteins (PhnE2) and a solute-binding protein (PhnD2).

The protein resides in the cell membrane. In terms of biological role, probably part of the ABC transporter complex PhnC2D2E2. Binds strongly to methylphosphonate (MPn), ethylphosphonate (EPn) and inorganic phosphite. This chain is Probable ABC transporter phosphonate/phosphite binding protein PhnD2, found in Prochlorococcus marinus (strain MIT 9301).